Consider the following 420-residue polypeptide: MSTSFARKSHTFLPKIFFRKMSSSGAKDKPELQFPFLQDEDTVATLHECKTLFILRGLPGSGKSTLARLIVEKYHNGTKMVSADAYKIIPGSRADFSEEYKRLDEDLAGYCRRDIRVLVLDDTNHERERLDQLFEMADQYQYQVVLVEPKTAWRLDCAQLKEKNQWQLSLDDLKKLKPGLEKDFLPLYFGWFLTKKSSETLRKAGQVFLEELGNHKAFKKELRHFISGDEPKEKLDLVSYFGKRPPGVLHCTTKFCDYGKATGAEEYAQQDVVRRSYGKAFKLSISALFVTPKTAGAQVVLNEQELQLWPSDLDKPSSSESLPPGSRAHVTLGCAADVQPVQTGLDLLEILQQVKGGSQGEEVGELPRGKLYSLGKGRWMLSLAKKMEVKAIFTGYYGKGKPVPVHGSRKGGAMQICTII.

At S9 the chain carries Phosphoserine. Y110 carries the post-translational modification Phosphotyrosine. 3 positions are modified to phosphoserine: S169, S227, and S239. H250 acts as the Proton acceptor in catalysis. Residue T252 coordinates substrate. T262 carries the phosphothreonine modification. H329 functions as the Proton donor in the catalytic mechanism. T331 contacts substrate. A Phosphoserine modification is found at S358. C417 carries the cysteine methyl ester modification. Residue C417 is the site of S-farnesyl cysteine attachment. The propeptide at T418–I420 is removed in mature form.

Belongs to the 2H phosphoesterase superfamily. CNPase family. Exists as monomers and homodimers.

Its subcellular location is the membrane. The protein resides in the melanosome. It catalyses the reaction a nucleoside 2',3'-cyclic phosphate + H2O = a nucleoside 2'-phosphate + H(+). Catalyzes the formation of 2'-nucleotide products from 2',3'-cyclic substrates. May participate in RNA metabolism in the myelinating cell, CNP is the third most abundant protein in central nervous system myelin. The sequence is that of 2',3'-cyclic-nucleotide 3'-phosphodiesterase from Rattus norvegicus (Rat).